A 183-amino-acid polypeptide reads, in one-letter code: UPF0398 protein PEPE_0933 (183 aa).

Belongs to the UPF0398 family.

The sequence is that of UPF0398 protein PEPE_0933 from Pediococcus pentosaceus (strain ATCC 25745 / CCUG 21536 / LMG 10740 / 183-1w).